The chain runs to 715 residues: Elongation factor G (715 aa).

A tr-type G domain is found at 12-309 (RRVRNIGIMA…GVIDYLPSPL (298 aa)). GTP contacts are provided by residues 21 to 28 (AHIDAGKT), 108 to 112 (DTPGH), and 162 to 165 (NKMD).

The protein belongs to the TRAFAC class translation factor GTPase superfamily. Classic translation factor GTPase family. EF-G/EF-2 subfamily.

Its subcellular location is the cytoplasm. Its function is as follows. Catalyzes the GTP-dependent ribosomal translocation step during translation elongation. During this step, the ribosome changes from the pre-translocational (PRE) to the post-translocational (POST) state as the newly formed A-site-bound peptidyl-tRNA and P-site-bound deacylated tRNA move to the P and E sites, respectively. Catalyzes the coordinated movement of the two tRNA molecules, the mRNA and conformational changes in the ribosome. In Rubrobacter xylanophilus (strain DSM 9941 / JCM 11954 / NBRC 16129 / PRD-1), this protein is Elongation factor G.